A 408-amino-acid polypeptide reads, in one-letter code: LL-diaminopimelate aminotransferase (408 aa).

Tyr-15 and Gly-42 together coordinate substrate. Pyridoxal 5'-phosphate is bound by residues Tyr-72, 108–109, Tyr-132, Asn-187, Tyr-218, and 246–248; these read SK and SFS. 3 residues coordinate substrate: Lys-109, Tyr-132, and Asn-187. Lys-249 carries the N6-(pyridoxal phosphate)lysine modification. Positions 257 and 292 each coordinate pyridoxal 5'-phosphate. Residues Asn-292 and Arg-388 each coordinate substrate.

Belongs to the class-I pyridoxal-phosphate-dependent aminotransferase family. LL-diaminopimelate aminotransferase subfamily. In terms of assembly, homodimer. The cofactor is pyridoxal 5'-phosphate.

It carries out the reaction (2S,6S)-2,6-diaminopimelate + 2-oxoglutarate = (S)-2,3,4,5-tetrahydrodipicolinate + L-glutamate + H2O + H(+). It participates in amino-acid biosynthesis; L-lysine biosynthesis via DAP pathway; LL-2,6-diaminopimelate from (S)-tetrahydrodipicolinate (aminotransferase route): step 1/1. Involved in the synthesis of meso-diaminopimelate (m-DAP or DL-DAP), required for both lysine and peptidoglycan biosynthesis. Catalyzes the direct conversion of tetrahydrodipicolinate to LL-diaminopimelate. The sequence is that of LL-diaminopimelate aminotransferase from Prochlorococcus marinus (strain MIT 9301).